The primary structure comprises 634 residues: 1-deoxy-D-xylulose-5-phosphate synthase (634 aa).

Thiamine diphosphate-binding positions include histidine 73 and 114 to 116; that span reads GHS. Residue aspartate 145 coordinates Mg(2+). Thiamine diphosphate contacts are provided by residues 146–147, asparagine 174, phenylalanine 285, and glutamate 367; that span reads GS. Asparagine 174 provides a ligand contact to Mg(2+).

The protein belongs to the transketolase family. DXPS subfamily. Homodimer. It depends on Mg(2+) as a cofactor. Thiamine diphosphate is required as a cofactor.

It carries out the reaction D-glyceraldehyde 3-phosphate + pyruvate + H(+) = 1-deoxy-D-xylulose 5-phosphate + CO2. Its pathway is metabolic intermediate biosynthesis; 1-deoxy-D-xylulose 5-phosphate biosynthesis; 1-deoxy-D-xylulose 5-phosphate from D-glyceraldehyde 3-phosphate and pyruvate: step 1/1. Catalyzes the acyloin condensation reaction between C atoms 2 and 3 of pyruvate and glyceraldehyde 3-phosphate to yield 1-deoxy-D-xylulose-5-phosphate (DXP). This Syntrophotalea carbinolica (strain DSM 2380 / NBRC 103641 / GraBd1) (Pelobacter carbinolicus) protein is 1-deoxy-D-xylulose-5-phosphate synthase.